The chain runs to 938 residues: Kexin (938 aa).

Residues methionine 1 to glutamine 20 form the signal peptide. Asparagine 41 and asparagine 193 each carry an N-linked (GlcNAc...) asparagine glycan. The 311-residue stretch at glutamine 179–valine 489 folds into the Peptidase S8 domain. Active-site charge relay system residues include aspartate 213 and histidine 251. Disulfide bonds link cysteine 267–cysteine 414 and cysteine 359–cysteine 389. Residue serine 422 is the Charge relay system of the active site. N-linked (GlcNAc...) asparagine glycans are attached at residues asparagine 441, asparagine 512, asparagine 539, and asparagine 599. The P/Homo B domain maps to valine 498–aspartate 647. The segment at glutamate 671–lysine 768 is disordered. Low complexity predominate over residues serine 677–serine 691. Positions lysine 711–proline 735 are enriched in polar residues. Positions serine 740 to asparagine 762 are enriched in acidic residues. The helical transmembrane segment at glycine 775–phenylalanine 795 threads the bilayer. The Cytoplasmic portion of the chain corresponds to histidine 796–aspartate 924. Residues threonine 798–arginine 808 show a composition bias toward basic residues. The disordered stretch occupies residues threonine 798–glutamine 938. Over residues aspartate 820–phenylalanine 831 the composition is skewed to acidic residues. Residues aspartate 832–glutamine 849 show a composition bias toward basic and acidic residues. The segment covering arginine 850 to arginine 859 has biased composition (low complexity). The segment covering glutamine 860–aspartate 874 has biased composition (basic and acidic residues). A compositionally biased stretch (polar residues) spans glutamine 902–threonine 919. The segment covering lysine 921–glutamine 938 has biased composition (basic and acidic residues).

It belongs to the peptidase S8 family. Furin subfamily. The cofactor is Ca(2+). In terms of processing, O-glycosylated.

It localises to the golgi apparatus. The protein resides in the trans-Golgi network membrane. The enzyme catalyses Cleavage of -Lys-Arg-|-Xaa- and -Arg-Arg-|-Xaa- bonds to process yeast alpha-factor pheromone and killer toxin precursors.. This chain is Kexin (KEX2), found in Candida albicans (strain WO-1) (Yeast).